The sequence spans 269 residues: Cytochrome c oxidase subunit 3 (269 aa).

The next 7 helical transmembrane spans lie at 7–29 (GYLQ…TSFS), 51–71 (IILS…DIIA), 90–110 (GFLL…WAYL), 127–147 (VGID…ILLA), 167–187 (TLYG…FQFL), 205–225 (FYSL…MLVI), and 247–267 (ILYL…VYWW).

Belongs to the cytochrome c oxidase subunit 3 family. As to quaternary structure, component of the cytochrome c oxidase (complex IV, CIV), a multisubunit enzyme composed of a catalytic core of 3 subunits and several supernumerary subunits. The complex exists as a monomer or a dimer and forms supercomplexes (SCs) in the inner mitochondrial membrane with ubiquinol-cytochrome c oxidoreductase (cytochrome b-c1 complex, complex III, CIII).

The protein localises to the mitochondrion inner membrane. It carries out the reaction 4 Fe(II)-[cytochrome c] + O2 + 8 H(+)(in) = 4 Fe(III)-[cytochrome c] + 2 H2O + 4 H(+)(out). In terms of biological role, component of the cytochrome c oxidase, the last enzyme in the mitochondrial electron transport chain which drives oxidative phosphorylation. The respiratory chain contains 3 multisubunit complexes succinate dehydrogenase (complex II, CII), ubiquinol-cytochrome c oxidoreductase (cytochrome b-c1 complex, complex III, CIII) and cytochrome c oxidase (complex IV, CIV), that cooperate to transfer electrons derived from NADH and succinate to molecular oxygen, creating an electrochemical gradient over the inner membrane that drives transmembrane transport and the ATP synthase. Cytochrome c oxidase is the component of the respiratory chain that catalyzes the reduction of oxygen to water. Electrons originating from reduced cytochrome c in the intermembrane space (IMS) are transferred via the dinuclear copper A center (CU(A)) of subunit 2 and heme A of subunit 1 to the active site in subunit 1, a binuclear center (BNC) formed by heme A3 and copper B (CU(B)). The BNC reduces molecular oxygen to 2 water molecules using 4 electrons from cytochrome c in the IMS and 4 protons from the mitochondrial matrix. The polypeptide is Cytochrome c oxidase subunit 3 (COX3) (Candida parapsilosis (Yeast)).